Reading from the N-terminus, the 874-residue chain is Alanine--tRNA ligase (874 aa).

Zn(2+) contacts are provided by His-563, His-567, Cys-665, and His-669.

This sequence belongs to the class-II aminoacyl-tRNA synthetase family. Zn(2+) serves as cofactor.

The protein resides in the cytoplasm. The enzyme catalyses tRNA(Ala) + L-alanine + ATP = L-alanyl-tRNA(Ala) + AMP + diphosphate. In terms of biological role, catalyzes the attachment of alanine to tRNA(Ala) in a two-step reaction: alanine is first activated by ATP to form Ala-AMP and then transferred to the acceptor end of tRNA(Ala). Also edits incorrectly charged Ser-tRNA(Ala) and Gly-tRNA(Ala) via its editing domain. The sequence is that of Alanine--tRNA ligase from Actinobacillus pleuropneumoniae serotype 7 (strain AP76).